A 276-amino-acid chain; its full sequence is Ribonuclease 3 (276 aa).

Residues 1 to 29 (MRGTVSVPKKAEDAKADPPAKKKADTQAS) form a disordered region. The span at 9–25 (KKAEDAKADPPAKKKAD) shows a compositional bias: basic and acidic residues. The 127-residue stretch at 31-157 (HTLLEGRLGY…VIGAVYLDQG (127 aa)) folds into the RNase III domain. E70 is a Mg(2+) binding site. D74 is an active-site residue. Residues D143 and E146 each contribute to the Mg(2+) site. E146 is an active-site residue. Positions 184-252 (DWKTSLQELT…AESAWRSIRA (69 aa)) constitute a DRBM domain. Positions 227 to 276 (YGTGTGRSKKEAEQQAAESAWRSIRAAADERAKATADAVDADPDEASASA) are disordered. Positions 265 to 276 (VDADPDEASASA) are enriched in acidic residues.

The protein belongs to the ribonuclease III family. As to quaternary structure, homodimer. Mg(2+) serves as cofactor.

It localises to the cytoplasm. The enzyme catalyses Endonucleolytic cleavage to 5'-phosphomonoester.. Digests double-stranded RNA. Involved in the processing of primary rRNA transcript to yield the immediate precursors to the large and small rRNAs (23S and 16S). Also processes some mRNAs, and tRNAs when they are encoded in the rRNA operon. May modulate key aspects of gene expression as its absence has extensive effects on the abundance of about 200 different transcripts. Probably processes pre-crRNA and tracrRNA of type II CRISPR loci if present in the organism. In Streptomyces coelicolor (strain ATCC BAA-471 / A3(2) / M145), this protein is Ribonuclease 3 (rnc).